A 406-amino-acid polypeptide reads, in one-letter code: 3-oxoacyl-[acyl-carrier-protein] synthase 1 (406 aa).

In terms of domain architecture, Ketosynthase family 3 (KS3) spans 1 to 403; the sequence is MKRAVITGLG…GTNATLVMRK (403 aa). Catalysis depends on for beta-ketoacyl synthase activity residues C163, H298, and H333.

The protein belongs to the thiolase-like superfamily. Beta-ketoacyl-ACP synthases family. As to quaternary structure, homodimer.

It localises to the cytoplasm. It catalyses the reaction a fatty acyl-[ACP] + malonyl-[ACP] + H(+) = a 3-oxoacyl-[ACP] + holo-[ACP] + CO2. The catalysed reaction is (3Z)-decenoyl-[ACP] + malonyl-[ACP] + H(+) = 3-oxo-(5Z)-dodecenoyl-[ACP] + holo-[ACP] + CO2. It functions in the pathway lipid metabolism; fatty acid biosynthesis. Its function is as follows. Involved in the type II fatty acid elongation cycle. Catalyzes the elongation of a wide range of acyl-ACP by the addition of two carbons from malonyl-ACP to an acyl acceptor. Can also use unsaturated fatty acids. Catalyzes a key reaction in unsaturated fatty acid (UFA) synthesis, the elongation of the cis-3-decenoyl-ACP produced by FabA. This chain is 3-oxoacyl-[acyl-carrier-protein] synthase 1 (fabB), found in Escherichia coli O6:H1 (strain CFT073 / ATCC 700928 / UPEC).